Consider the following 538-residue polypeptide: MARGSGAGGGGGGGGGGLELSVGVGGGGGARGGGGGEAAAAVETAAPISLGRLILSGMVAGGVQYGWALQLSLLTPYVQTLGLSHALTSFMWLCGPIAGMVVQPCVGLYSDRCTSKWGRRRPYILTGCVLICLAVVVIGFSADIGYAMGDTKEDCSVYHGSRWHAAIVYVLGFWLLDFSNNTVQGPARALMADLSGRHGPGTANSIFCSWMAMGNILGYSSGSTNNWHKWFPFLKTRACCEACANLKGAFLVAVIFLSLCLVITLIFAKEVPFKGNAALPTKSNEPAEPEGTGPLAVLKGFRNLPTGMPSVLIVTGLTWLSWFPFILYDTDWMGREIYHGDPKGTDPQIEAFNQGVRAGAFGLLLNSIVLGFSSFLIEPMCRKVGPRVVWVTSNFLVCIAMAATALISFWSLKDFHGTVQKAITADKSIKAVCLVLFAFLGVPLAVLYSVPFAVTAQLAATRGGGQGLCTGVLNISIVIPQVVIALGAGPWDELFGKGNIPAFGLASGFALIGGVAGIFLLPKISKRQFRSVSMGGGH.

Topologically, residues 1 to 52 (MARGSGAGGGGGGGGGGLELSVGVGGGGGARGGGGGEAAAAVETAAPISLGR) are cytoplasmic. A helical transmembrane segment spans residues 53-73 (LILSGMVAGGVQYGWALQLSL). Residues 74–81 (LTPYVQTL) lie on the Extracellular side of the membrane. A helical membrane pass occupies residues 82–102 (GLSHALTSFMWLCGPIAGMVV). Residues 103–123 (QPCVGLYSDRCTSKWGRRRPY) lie on the Cytoplasmic side of the membrane. Residues 124–144 (ILTGCVLICLAVVVIGFSADI) traverse the membrane as a helical segment. Topologically, residues 145–162 (GYAMGDTKEDCSVYHGSR) are extracellular. A helical transmembrane segment spans residues 163-183 (WHAAIVYVLGFWLLDFSNNTV). Residues 184–198 (QGPARALMADLSGRH) are Cytoplasmic-facing. A helical transmembrane segment spans residues 199 to 219 (GPGTANSIFCSWMAMGNILGY). Topologically, residues 220-247 (SSGSTNNWHKWFPFLKTRACCEACANLK) are extracellular. Residues 248 to 268 (GAFLVAVIFLSLCLVITLIFA) form a helical membrane-spanning segment. The Cytoplasmic segment spans residues 269-306 (KEVPFKGNAALPTKSNEPAEPEGTGPLAVLKGFRNLPT). Residues 307–327 (GMPSVLIVTGLTWLSWFPFIL) form a helical membrane-spanning segment. The Extracellular segment spans residues 328–357 (YDTDWMGREIYHGDPKGTDPQIEAFNQGVR). The chain crosses the membrane as a helical span at residues 358-378 (AGAFGLLLNSIVLGFSSFLIE). The Cytoplasmic portion of the chain corresponds to 379 to 388 (PMCRKVGPRV). A helical transmembrane segment spans residues 389–409 (VWVTSNFLVCIAMAATALISF). Topologically, residues 410 to 433 (WSLKDFHGTVQKAITADKSIKAVC) are extracellular. The chain crosses the membrane as a helical span at residues 434 to 454 (LVLFAFLGVPLAVLYSVPFAV). The Cytoplasmic segment spans residues 455–470 (TAQLAATRGGGQGLCT). Residues 471–491 (GVLNISIVIPQVVIALGAGPW) form a helical membrane-spanning segment. At 492 to 499 (DELFGKGN) the chain is on the extracellular side. The helical transmembrane segment at 500–520 (IPAFGLASGFALIGGVAGIFL) threads the bilayer. Topologically, residues 521-538 (LPKISKRQFRSVSMGGGH) are cytoplasmic.

The protein belongs to the glycoside-pentoside-hexuronide (GPH) cation symporter transporter (TC 2.A.2.4) family. As to quaternary structure, homodimer.

The protein resides in the cell membrane. It functions in the pathway glycan biosynthesis; sucrose metabolism. In terms of biological role, responsible for the transport of sucrose into the cell, with the concomitant uptake of protons (symport system). May also transport other glucosides. May be required for apoplastic phloem sucrose loading in source tissues (e.g. leaves) in order to transport it to sink tissues (e.g. roots, flowers). This chain is Sucrose transport protein SUT1 (SUT1), found in Oryza sativa subsp. indica (Rice).